The following is a 183-amino-acid chain: Calcineurin subunit B type 2 (183 aa).

A lipid anchor (N-myristoyl glycine) is attached at Gly2. 4 consecutive EF-hand domains span residues 25 to 60, 64 to 92, 94 to 129, and 135 to 170; these read REIK…SMNP, RIIS…FHPK, DKAD…MVGS, and QISS…SGCN. Positions 107, 109, 111, and 118 each coordinate Ca(2+).

The protein belongs to the calcineurin regulatory subunit family. As to quaternary structure, calcineurin is composed of a catalytic subunit (A) and a regulatory subunit (B).

Regulatory subunit of calcineurin, a calcium-dependent, calmodulin stimulated protein phosphatase. Confers calcium sensitivity. The chain is Calcineurin subunit B type 2 (cnbB) from Dictyostelium discoideum (Social amoeba).